We begin with the raw amino-acid sequence, 671 residues long: UvrABC system protein C (671 aa).

The disordered stretch occupies residues 1–20 (MPHLPDSMSPEAPAGPAPAT). Over residues 10 to 20 (PEAPAGPAPAT) the composition is skewed to low complexity. A GIY-YIG domain is found at 37-115 (PLPGVYRYFD…IKTLNPKYNI (79 aa)). One can recognise a UVR domain in the interval 232–267 (RQVMEALEARMMAHAEKLEFEQAAELRNQVAALSNV).

The protein belongs to the UvrC family. As to quaternary structure, interacts with UvrB in an incision complex.

Its subcellular location is the cytoplasm. The UvrABC repair system catalyzes the recognition and processing of DNA lesions. UvrC both incises the 5' and 3' sides of the lesion. The N-terminal half is responsible for the 3' incision and the C-terminal half is responsible for the 5' incision. The protein is UvrABC system protein C of Albidiferax ferrireducens (strain ATCC BAA-621 / DSM 15236 / T118) (Rhodoferax ferrireducens).